Here is a 497-residue protein sequence, read N- to C-terminus: Tryptophan decarboxylase 2 (497 aa).

Pyridoxal 5'-phosphate is bound by residues Ala162, Ser163, Thr257, and Asn311. Lys314 is modified (N6-(pyridoxal phosphate)lysine).

This sequence belongs to the group II decarboxylase family. Requires pyridoxal 5'-phosphate as cofactor.

The enzyme catalyses L-tryptophan + H(+) = tryptamine + CO2. In terms of biological role, involved in serotonin biosynthesis. Catalyzes the decarboxylation of L-tryptophan to tryptamine, which is converted to serotonin by tryptamine 5-hydroxylase. May play a minor role in serotonin biosynthetis during senescence. Accumulation of serotonin attenuates leaf senescence. The protein is Tryptophan decarboxylase 2 of Oryza sativa subsp. japonica (Rice).